Here is an 80-residue protein sequence, read N- to C-terminus: Toxin TdNa1 (80 aa).

The N-terminal stretch at 1-20 (MKGIILFISCLMLIDVVVES) is a signal peptide. The 59-residue stretch at 21 to 79 (RDAYPADWRGCKFSCFWGSSSWCNEECTSLGGSSGYCAWPACWCYGLPDSVRYYNNKCH) folds into the LCN-type CS-alpha/beta domain. Intrachain disulfides connect Cys31-Cys78, Cys35-Cys57, Cys43-Cys62, and Cys47-Cys64.

This sequence belongs to the long (4 C-C) scorpion toxin superfamily. Sodium channel inhibitor family. Beta subfamily. Expressed by the venom gland.

It is found in the secreted. Its function is as follows. Inhibits the sodium (Nav) currents in an apparent irreversible manner. Produces small depolarization and induces repetitive firing in squid axons. Is specific for arthropods (crickets, triatomides, crabs and squids), but is non-toxic to mice. In Tityus discrepans (Venezuelan scorpion), this protein is Toxin TdNa1.